The following is a 242-amino-acid chain: UPF0246 protein SPP_1571 (242 aa).

It belongs to the UPF0246 family.

This Streptococcus pneumoniae (strain P1031) protein is UPF0246 protein SPP_1571.